Consider the following 863-residue polypeptide: Paramyosin (863 aa).

Residues 1–18 (MSESHVKISRTIIRGTSP) form a nonhelical region region. A coiled-coil region spans residues 19-836 (STVRLESRVR…ERTITIKRTI (818 aa)). Residues 837 to 863 (GGPGSRAVSVVREINSVSRGNRATSIM) form a nonhelical region region.

It belongs to the paramyosin family. As to quaternary structure, homodimer.

It localises to the cytoplasm. The protein resides in the myofibril. Functionally, paramyosin is a major structural component of many thick filaments isolated from invertebrate muscles. The sequence is that of Paramyosin (PMY) from Taenia saginata (Beef tapeworm).